The primary structure comprises 373 residues: NADPH-dependent 3-keto-steroid reductase HSD3B3 (373 aa).

NADP(+) contacts are provided by residues 10-15 (GAGGFL), Tyr155, and Lys159. Lys159 (proton donor) is an active-site residue. A helical membrane pass occupies residues 288–308 (VALLYWFGFLLETVSFLLRPV).

The protein belongs to the 3-beta-HSD family. As to expression, high levels in adrenal gland, kidney and male liver (at protein level). Low levels in female liver (at protein level). Expressed in ovaries (at protein level).

The protein localises to the endoplasmic reticulum membrane. The protein resides in the mitochondrion membrane. It carries out the reaction a 3beta-hydroxysteroid + NADP(+) = a 3-oxosteroid + NADPH + H(+). The enzyme catalyses 5alpha-androstane-3beta,17beta-diol + NADP(+) = 17beta-hydroxy-5alpha-androstan-3-one + NADPH + H(+). Its pathway is steroid metabolism. Functionally, responsible for the reduction of the oxo group on the C-3 of 5alpha-androstane steroids. Catalyzes the conversion of dihydrotestosterone to its inactive form 5alpha-androstanediol, that does not bind androgen receptor/AR. Does not function as an isomerase. In Mesocricetus auratus (Golden hamster), this protein is NADPH-dependent 3-keto-steroid reductase HSD3B3 (HSD3B3).